Reading from the N-terminus, the 137-residue chain is ATP synthase epsilon chain (137 aa).

It belongs to the ATPase epsilon chain family. F-type ATPases have 2 components, CF(1) - the catalytic core - and CF(0) - the membrane proton channel. CF(1) has five subunits: alpha(3), beta(3), gamma(1), delta(1), epsilon(1). CF(0) has three main subunits: a, b and c.

The protein localises to the cell inner membrane. Its function is as follows. Produces ATP from ADP in the presence of a proton gradient across the membrane. The sequence is that of ATP synthase epsilon chain from Pseudoalteromonas atlantica (strain T6c / ATCC BAA-1087).